Here is a 387-residue protein sequence, read N- to C-terminus: Tetratricopeptide repeat protein 4 (387 aa).

M1 is modified (N-acetylmethionine). Residues S47 and S51 each carry the phosphoserine modification. TPR repeat units lie at residues 79–112, 117–150, and 151–184; these read AKTY…KCAD, AVLY…KPCH, and LKAI…DAKE. S243 bears the Phosphoserine mark.

It belongs to the TTC4 family. Interacts (via TPR repeats) with HSP90AB1. Interacts with HSPA8 and CDC6. Interacts with TBK1. Interacts with MSL1. In terms of tissue distribution, highly expressed in proliferating tissue and tumor cell lines but not in normal cell lines.

The protein resides in the nucleus. It localises to the nucleoplasm. The protein localises to the cytoplasm. Functionally, may act as a co-chaperone for HSP90AB1. Promotes Sendai virus (SeV)-induced host cell innate immune responses. In Homo sapiens (Human), this protein is Tetratricopeptide repeat protein 4 (TTC4).